Here is a 45-residue protein sequence, read N- to C-terminus: uncharacterized protein (45 aa).

Residues 18–45 are disordered; it reads RRGRIGVQPSPERRSEVVGPFPLARSLS.

This is an uncharacterized protein from Homo sapiens (Human).